Consider the following 416-residue polypeptide: D-amino acid dehydrogenase 2 (416 aa).

5-19 (VCIIGAGVVGLATAY) contacts FAD.

Belongs to the DadA oxidoreductase family. FAD serves as cofactor.

The enzyme catalyses a D-alpha-amino acid + A + H2O = a 2-oxocarboxylate + AH2 + NH4(+). Its function is as follows. Oxidative deamination of D-amino acids. The sequence is that of D-amino acid dehydrogenase 2 (dadA2) from Pseudomonas aeruginosa (strain ATCC 15692 / DSM 22644 / CIP 104116 / JCM 14847 / LMG 12228 / 1C / PRS 101 / PAO1).